A 165-amino-acid chain; its full sequence is Late embryogenesis abundant protein D-113 (165 aa).

Residues 1 to 13 (MQSMKDAAASAKA) are compositionally biased toward low complexity. Disordered regions lie at residues 1–76 (MQSM…IGGT) and 92–165 (GGTG…YRSY). Over residues 14-60 (GMEKAKASMQEKVDQMKTRDPNEKEMARERKEERQEDAELRKQEARH) the composition is skewed to basic and acidic residues. A compositionally biased stretch (gly residues) spans 67–76 (HVGGGGIGGT). A compositionally biased stretch (polar residues) spans 132–155 (TTGNQDFPNAASNNAGTRRNTRGG).

The protein belongs to the LEA type 1 family.

In terms of biological role, LEA proteins are late embryonic proteins abundant in higher plant seed embryos. There are two subsets of LEA proteins (5a and 5b), the first ones are expressed when the cotyledon weight reach 80 mg and the second set are expressed above 100 mg. The function of those proteins is not known. In Gossypium hirsutum (Upland cotton), this protein is Late embryogenesis abundant protein D-113.